Reading from the N-terminus, the 30-residue chain is rRNA N-glycosylase (30 aa).

This sequence belongs to the ribosome-inactivating protein family. Type 1 RIP subfamily. Expressed in seeds.

The catalysed reaction is Endohydrolysis of the N-glycosidic bond at one specific adenosine on the 28S rRNA.. Functionally, exhibits N-glycosylase activity. Catalyzes the release of one adenine from a ribosome. Acts as a ribosome-inactivating protein and inhibits protein synthesis in a rabbit-reticulocyte lysate system and in various cell lines (in vitro). The polypeptide is rRNA N-glycosylase (Saponaria ocymoides (Rock soapwort)).